The chain runs to 1071 residues: DNA-directed RNA polymerase subunit beta (1071 aa).

It belongs to the RNA polymerase beta chain family. As to quaternary structure, in plastids the minimal PEP RNA polymerase catalytic core is composed of four subunits: alpha, beta, beta', and beta''. When a (nuclear-encoded) sigma factor is associated with the core the holoenzyme is formed, which can initiate transcription.

It localises to the plastid. It is found in the chloroplast. The catalysed reaction is RNA(n) + a ribonucleoside 5'-triphosphate = RNA(n+1) + diphosphate. DNA-dependent RNA polymerase catalyzes the transcription of DNA into RNA using the four ribonucleoside triphosphates as substrates. This Acorus gramineus (Dwarf sweet flag) protein is DNA-directed RNA polymerase subunit beta.